Consider the following 156-residue polypeptide: C-type lectin lectoxin-Phi2 (156 aa).

Positions 1 to 23 (MGRFIFVSLGLLVLAFSLSGIGA) are cleaved as a signal peptide. 3 disulfide bridges follow: Cys-27/Cys-38, Cys-55/Cys-154, and Cys-129/Cys-146. One can recognise a C-type lectin domain in the interval 34–155 (HNVSCYKLIN…CNRRHRFLCK (122 aa)). Asn-35 and Asn-109 each carry an N-linked (GlcNAc...) asparagine glycan. Positions 119-121 (EPN) match the Mannose-binding motif. Glu-127, Asn-142, and Asp-143 together coordinate Ca(2+).

This sequence belongs to the true venom lectin family. In terms of tissue distribution, expressed by the venom gland.

It localises to the secreted. Its function is as follows. Mannose-binding lectin which recognizes specific carbohydrate structures and agglutinates a variety of animal cells by binding to cell-surface glycoproteins and glycolipids. May be a calcium-dependent lectin. The chain is C-type lectin lectoxin-Phi2 from Philodryas olfersii (Green snake).